Here is a 267-residue protein sequence, read N- to C-terminus: Tryptophan synthase alpha chain (267 aa).

Active-site proton acceptor residues include glutamate 49 and aspartate 60.

This sequence belongs to the TrpA family. As to quaternary structure, tetramer of two alpha and two beta chains.

The enzyme catalyses (1S,2R)-1-C-(indol-3-yl)glycerol 3-phosphate + L-serine = D-glyceraldehyde 3-phosphate + L-tryptophan + H2O. It participates in amino-acid biosynthesis; L-tryptophan biosynthesis; L-tryptophan from chorismate: step 5/5. Its function is as follows. The alpha subunit is responsible for the aldol cleavage of indoleglycerol phosphate to indole and glyceraldehyde 3-phosphate. The polypeptide is Tryptophan synthase alpha chain (Acinetobacter baylyi (strain ATCC 33305 / BD413 / ADP1)).